The primary structure comprises 449 residues: NADH-quinone oxidoreductase subunit H (449 aa).

9 helical membrane-spanning segments follow: residues 29 to 49, 96 to 116, 136 to 156, 177 to 197, 211 to 231, 259 to 279, 298 to 318, 330 to 350, and 365 to 385; these read ILLKAVAVFAFLLLMTLFAIV, PIFILAPIVSAVPAFLAFAVI, LPVSVLYLLAAASLGVYGLIL, IISYEVAMGLAFVAVFIYAGT, WYIVLVPSFVLYCISMVGETN, FFFLAEYINMVTVSAIATTLF, WVPLIWFVLKLLAFLFFFIWL, FMSFGWKVLIPVGLVWVLAVA, and WLVGFGVVVGILLIVALIDPG. A compositionally biased stretch (basic and acidic residues) spans 393-402; that stretch reads LEEAEQRKLA. The segment at 393 to 449 is disordered; it reads LEEAEQRKLAEAPSLDRIPWPPPPQAAGRGRPAVSAGASANGSSTVIPADPGPRQER. Residues 418–436 are compositionally biased toward low complexity; that stretch reads AAGRGRPAVSAGASANGSS.

Belongs to the complex I subunit 1 family. In terms of assembly, NDH-1 is composed of 14 different subunits. Subunits NuoA, H, J, K, L, M, N constitute the membrane sector of the complex.

The protein resides in the cell membrane. The catalysed reaction is a quinone + NADH + 5 H(+)(in) = a quinol + NAD(+) + 4 H(+)(out). Its function is as follows. NDH-1 shuttles electrons from NADH, via FMN and iron-sulfur (Fe-S) centers, to quinones in the respiratory chain. The immediate electron acceptor for the enzyme in this species is believed to be ubiquinone. Couples the redox reaction to proton translocation (for every two electrons transferred, four hydrogen ions are translocated across the cytoplasmic membrane), and thus conserves the redox energy in a proton gradient. This subunit may bind ubiquinone. The polypeptide is NADH-quinone oxidoreductase subunit H (Frankia casuarinae (strain DSM 45818 / CECT 9043 / HFP020203 / CcI3)).